The sequence spans 160 residues: Bursicon (160 aa).

A signal peptide spans 1–20; sequence MSVLNTFLVIVALILCYVND. The CTCK domain maps to 38–131; sequence CQECQMTAVI…PLQCMCRPCG (94 aa). Disulfide bonds link C41-C90, C55-C104, C65-C125, C69-C127, and C87-C130.

Heterodimer of burs and pburs.

Its subcellular location is the secreted. Final heterodimeric neurohormone released at the end of the molting cycle, involved in the sclerotization (tanning) of the insect cuticle, melanization and wing spreading. The polypeptide is Bursicon (Bombyx mori (Silk moth)).